Consider the following 286-residue polypeptide: Bifunctional protein FolD 2 (286 aa).

NADP(+)-binding positions include 165–167 (GRG), threonine 192, and valine 233.

It belongs to the tetrahydrofolate dehydrogenase/cyclohydrolase family. As to quaternary structure, homodimer.

The catalysed reaction is (6R)-5,10-methylene-5,6,7,8-tetrahydrofolate + NADP(+) = (6R)-5,10-methenyltetrahydrofolate + NADPH. It carries out the reaction (6R)-5,10-methenyltetrahydrofolate + H2O = (6R)-10-formyltetrahydrofolate + H(+). It participates in one-carbon metabolism; tetrahydrofolate interconversion. In terms of biological role, catalyzes the oxidation of 5,10-methylenetetrahydrofolate to 5,10-methenyltetrahydrofolate and then the hydrolysis of 5,10-methenyltetrahydrofolate to 10-formyltetrahydrofolate. This Rhodococcus jostii (strain RHA1) protein is Bifunctional protein FolD 2.